The chain runs to 437 residues: Enolase (437 aa).

Gln162 is a binding site for (2R)-2-phosphoglycerate. Glu204 acts as the Proton donor in catalysis. The Mg(2+) site is built by Asp251, Glu297, and Asp324. Residues Lys349, Arg378, Ser379, and Lys400 each contribute to the (2R)-2-phosphoglycerate site. Lys349 functions as the Proton acceptor in the catalytic mechanism.

This sequence belongs to the enolase family. The cofactor is Mg(2+).

The protein localises to the cytoplasm. Its subcellular location is the secreted. The protein resides in the cell surface. It catalyses the reaction (2R)-2-phosphoglycerate = phosphoenolpyruvate + H2O. It participates in carbohydrate degradation; glycolysis; pyruvate from D-glyceraldehyde 3-phosphate: step 4/5. Catalyzes the reversible conversion of 2-phosphoglycerate (2-PG) into phosphoenolpyruvate (PEP). It is essential for the degradation of carbohydrates via glycolysis. The chain is Enolase from Chlorobium limicola (strain DSM 245 / NBRC 103803 / 6330).